Here is a 118-residue protein sequence, read N- to C-terminus: Large ribosomal subunit protein bL17 (118 aa).

It belongs to the bacterial ribosomal protein bL17 family. In terms of assembly, part of the 50S ribosomal subunit. Contacts protein L32.

The protein is Large ribosomal subunit protein bL17 of Onion yellows phytoplasma (strain OY-M).